A 237-amino-acid polypeptide reads, in one-letter code: Uridylate kinase (237 aa).

12–15 (KLSG) lines the ATP pocket. Residue glycine 53 coordinates UMP. ATP-binding residues include glycine 54 and arginine 58. Residues aspartate 73 and 134–141 (TGNPYFTT) each bind UMP. 3 residues coordinate ATP: threonine 161, tyrosine 167, and aspartate 170.

It belongs to the UMP kinase family. Homohexamer.

The protein resides in the cytoplasm. The enzyme catalyses UMP + ATP = UDP + ADP. It participates in pyrimidine metabolism; CTP biosynthesis via de novo pathway; UDP from UMP (UMPK route): step 1/1. Its activity is regulated as follows. Inhibited by UTP. Functionally, catalyzes the reversible phosphorylation of UMP to UDP. This Rhizorhabdus wittichii (strain DSM 6014 / CCUG 31198 / JCM 15750 / NBRC 105917 / EY 4224 / RW1) (Sphingomonas wittichii) protein is Uridylate kinase.